The sequence spans 279 residues: Tryptophan synthase alpha chain (279 aa).

Residues Glu50 and Asp61 each act as proton acceptor in the active site.

This sequence belongs to the TrpA family. In terms of assembly, tetramer of two alpha and two beta chains.

It catalyses the reaction (1S,2R)-1-C-(indol-3-yl)glycerol 3-phosphate + L-serine = D-glyceraldehyde 3-phosphate + L-tryptophan + H2O. The protein operates within amino-acid biosynthesis; L-tryptophan biosynthesis; L-tryptophan from chorismate: step 5/5. Its function is as follows. The alpha subunit is responsible for the aldol cleavage of indoleglycerol phosphate to indole and glyceraldehyde 3-phosphate. The polypeptide is Tryptophan synthase alpha chain (Brucella melitensis biotype 2 (strain ATCC 23457)).